The primary structure comprises 160 residues: Cytochrome b6-f complex subunit 4 (160 aa).

The next 3 helical transmembrane spans lie at 36–56, 95–115, and 131–151; these read LLYI…GLAV, LLGI…PFIE, and AFFL…CLPI.

The protein belongs to the cytochrome b family. PetD subfamily. In terms of assembly, the 4 large subunits of the cytochrome b6-f complex are cytochrome b6, subunit IV (17 kDa polypeptide, PetD), cytochrome f and the Rieske protein, while the 4 small subunits are PetG, PetL, PetM and PetN. The complex functions as a dimer.

The protein localises to the cellular thylakoid membrane. Functionally, component of the cytochrome b6-f complex, which mediates electron transfer between photosystem II (PSII) and photosystem I (PSI), cyclic electron flow around PSI, and state transitions. In Prochlorococcus marinus (strain SARG / CCMP1375 / SS120), this protein is Cytochrome b6-f complex subunit 4.